The chain runs to 587 residues: Arginine--tRNA ligase (587 aa).

Positions 127-137 (PNLAKEMHVGH) match the 'HIGH' region motif.

Belongs to the class-I aminoacyl-tRNA synthetase family. Monomer.

Its subcellular location is the cytoplasm. The enzyme catalyses tRNA(Arg) + L-arginine + ATP = L-arginyl-tRNA(Arg) + AMP + diphosphate. This is Arginine--tRNA ligase from Pseudomonas aeruginosa (strain UCBPP-PA14).